The sequence spans 351 residues: Nicotinate-nucleotide--dimethylbenzimidazole phosphoribosyltransferase (351 aa).

The active-site Proton acceptor is the E317.

This sequence belongs to the CobT family.

It carries out the reaction 5,6-dimethylbenzimidazole + nicotinate beta-D-ribonucleotide = alpha-ribazole 5'-phosphate + nicotinate + H(+). The protein operates within nucleoside biosynthesis; alpha-ribazole biosynthesis; alpha-ribazole from 5,6-dimethylbenzimidazole: step 1/2. Functionally, catalyzes the synthesis of alpha-ribazole-5'-phosphate from nicotinate mononucleotide (NAMN) and 5,6-dimethylbenzimidazole (DMB). This is Nicotinate-nucleotide--dimethylbenzimidazole phosphoribosyltransferase from Bradyrhizobium sp. (strain ORS 278).